Reading from the N-terminus, the 446-residue chain is Vacuolar cation/proton exchanger 4 (446 aa).

Positions 1–16 (MSSISTESSSNLSLLE) are enriched in low complexity. The segment at 1–33 (MSSISTESSSNLSLLENGGGGSDKPTAETSRRV) is disordered. Residues 1 to 69 (MSSISTESSS…MRRILTNLQE (69 aa)) are Cytoplasmic-facing. A helical membrane pass occupies residues 70–90 (VLLGTKLFILFPAVPLAVVAH). At 91–96 (RYDCPR) the chain is on the extracellular side. A helical membrane pass occupies residues 97–117 (AWVFALSLLGLTPLAERISFL). Over 118–128 (TEQIAFHTGPT) the chain is Cytoplasmic. A helical membrane pass occupies residues 129-149 (VGGLMNATCGNATEMIIAILA). A cation selection region spans residues 138-173 (GNATEMIIAILAVGQRKMRIVKLSLLGSILSNLLFV). Over 150 to 162 (VGQRKMRIVKLSL) the chain is Extracellular. A helical transmembrane segment spans residues 163–183 (LGSILSNLLFVLGTSLFLGGI). Residues 184-196 (SNLRKHQSFDPRQ) lie on the Cytoplasmic side of the membrane. A helical membrane pass occupies residues 197–217 (GDMNSMLLYLALLCQTLPMIM). Over 218–238 (RFTMEAEEYDGSDVVVLSRAS) the chain is Extracellular. Residues 239-259 (SFVMLIAYLAFLIFHLFSSHL) form a helical membrane-spanning segment. Topologically, residues 260–285 (SPPPPPLPQREDVHDDDVSDKEEEGA) are cytoplasmic. Residues 286 to 306 (VIGMWSAIFWLIIMTLLVALL) traverse the membrane as a helical segment. Residues 307–319 (SDYLVSTIQDAAD) are Extracellular-facing. Residues 320–340 (SWGLSVGFIGIILLPIVGNAA) traverse the membrane as a helical segment. The segment at 337–372 (GNAAEHAGAVIFAFRNKLDITLGIALGSATQIALFV) is cation selection. Over 341 to 359 (EHAGAVIFAFRNKLDITLG) the chain is Cytoplasmic. The chain crosses the membrane as a helical span at residues 360-380 (IALGSATQIALFVVPVTVLVA). At 381–388 (WTMGIEMD) the chain is on the extracellular side. Residues 389–409 (LNFNLLETACFALSILVTSLV) form a helical membrane-spanning segment. The Cytoplasmic portion of the chain corresponds to 410–416 (LQDGTSN). The helical transmembrane segment at 417 to 437 (YMKGLVLLLCYVVIAACFFVS) threads the bilayer. At 438 to 446 (NSPSSKLLF) the chain is on the extracellular side.

It belongs to the Ca(2+):cation antiporter (CaCA) (TC 2.A.19) family. Cation/proton exchanger (CAX) subfamily. Expressed at low levels in all tissues.

It is found in the vacuole membrane. Vacuolar cation/proton exchanger (CAX). Translocates Ca(2+) and other metal ions into vacuoles using the proton gradient formed by H(+)-ATPase and H(+)-pyrophosphatase. Cation selectivity transport in tobacco root tonoplast vesicles is Cd(2+)&gt;Zn(2+)&gt;&gt;Ca(2+)&gt;&gt;&gt;Mn(2+). In Arabidopsis thaliana (Mouse-ear cress), this protein is Vacuolar cation/proton exchanger 4 (CAX4).